Reading from the N-terminus, the 213-residue chain is Leucine-rich repeat protein 1 (213 aa).

An N-terminal signal peptide occupies residues 1–21 (MGAGALGVVAMVAAAVVVAMA). LRR repeat units follow at residues 90-113 (DHLQ…LGNL), 115-137 (NLIS…LGKL), 138-161 (TSLV…LAGI), and 163-186 (SLKV…PFEH).

Interacts with HIR1.

Its subcellular location is the early endosome membrane. It localises to the late endosome membrane. It is found in the cell membrane. Involved in plant defense response. The polypeptide is Leucine-rich repeat protein 1 (Oryza sativa subsp. indica (Rice)).